Consider the following 139-residue polypeptide: Actin-depolymerizing factor 9 (139 aa).

Residues 7–139 enclose the ADF-H domain; it reads GLAVNDECKF…SLDIIRARAH (133 aa).

This sequence belongs to the actin-binding proteins ADF family.

Its function is as follows. Actin-depolymerizing protein. Severs actin filaments (F-actin) and binds to actin monomers. The chain is Actin-depolymerizing factor 9 (ADF9) from Oryza sativa subsp. japonica (Rice).